Consider the following 247-residue polypeptide: TM2 domain-containing protein 3 (247 aa).

A signal peptide spans methionine 1 to serine 30. The Extracellular segment spans residues phenylalanine 31–asparagine 179. N-linked (GlcNAc...) asparagine glycans are attached at residues asparagine 87, asparagine 99, asparagine 139, asparagine 155, asparagine 169, and asparagine 179. The chain crosses the membrane as a helical span at residues tryptophan 180–glycine 200. The TM2 domain occupies glycine 183–phenylalanine 231. The Cytoplasmic portion of the chain corresponds to alanine 201–lysine 215. The chain crosses the membrane as a helical span at residues leucine 216–glycine 236. Residues tyrosine 237–isoleucine 247 lie on the Extracellular side of the membrane.

The protein belongs to the TM2 family.

The protein localises to the membrane. The chain is TM2 domain-containing protein 3 (tm2d3) from Xenopus laevis (African clawed frog).